Reading from the N-terminus, the 345-residue chain is Holliday junction branch migration complex subunit RuvB (345 aa).

A large ATPase domain (RuvB-L) region spans residues 4 to 194; sequence TDKLFGAAPE…FGIVARLEFY (191 aa). ATP-binding positions include Leu33, Arg34, Gly75, Lys78, Thr79, Thr80, 141-143, Arg184, Tyr194, and Arg231; that span reads EDY. Residue Thr79 participates in Mg(2+) binding. Residues 195–265 form a small ATPAse domain (RuvB-S) region; that stretch reads NAEELTRIVS…VADAALAMLD (71 aa). Positions 268 to 345 are head domain (RuvB-H); it reads PAGLDVMDRK…LHFGLPVKDA (78 aa). Arg323 and Arg328 together coordinate DNA.

This sequence belongs to the RuvB family. Homohexamer. Forms an RuvA(8)-RuvB(12)-Holliday junction (HJ) complex. HJ DNA is sandwiched between 2 RuvA tetramers; dsDNA enters through RuvA and exits via RuvB. An RuvB hexamer assembles on each DNA strand where it exits the tetramer. Each RuvB hexamer is contacted by two RuvA subunits (via domain III) on 2 adjacent RuvB subunits; this complex drives branch migration. In the full resolvosome a probable DNA-RuvA(4)-RuvB(12)-RuvC(2) complex forms which resolves the HJ.

It localises to the cytoplasm. It catalyses the reaction ATP + H2O = ADP + phosphate + H(+). In terms of biological role, the RuvA-RuvB-RuvC complex processes Holliday junction (HJ) DNA during genetic recombination and DNA repair, while the RuvA-RuvB complex plays an important role in the rescue of blocked DNA replication forks via replication fork reversal (RFR). RuvA specifically binds to HJ cruciform DNA, conferring on it an open structure. The RuvB hexamer acts as an ATP-dependent pump, pulling dsDNA into and through the RuvAB complex. RuvB forms 2 homohexamers on either side of HJ DNA bound by 1 or 2 RuvA tetramers; 4 subunits per hexamer contact DNA at a time. Coordinated motions by a converter formed by DNA-disengaged RuvB subunits stimulates ATP hydrolysis and nucleotide exchange. Immobilization of the converter enables RuvB to convert the ATP-contained energy into a lever motion, pulling 2 nucleotides of DNA out of the RuvA tetramer per ATP hydrolyzed, thus driving DNA branch migration. The RuvB motors rotate together with the DNA substrate, which together with the progressing nucleotide cycle form the mechanistic basis for DNA recombination by continuous HJ branch migration. Branch migration allows RuvC to scan DNA until it finds its consensus sequence, where it cleaves and resolves cruciform DNA. The sequence is that of Holliday junction branch migration complex subunit RuvB from Chromobacterium violaceum (strain ATCC 12472 / DSM 30191 / JCM 1249 / CCUG 213 / NBRC 12614 / NCIMB 9131 / NCTC 9757 / MK).